The following is a 557-amino-acid chain: TBCC domain-containing protein 1 (557 aa).

In terms of domain architecture, C-CAP/cofactor C-like spans 290–435 (TTKRAKIACN…LEDHMARTGL (146 aa)).

It belongs to the TBCC family.

The protein resides in the cytoplasm. Its subcellular location is the cytoskeleton. It is found in the microtubule organizing center. The protein localises to the centrosome. It localises to the spindle pole. Functionally, plays a role in the regulation of centrosome and Golgi apparatus positioning, with consequences on cell shape and cell migration. The sequence is that of TBCC domain-containing protein 1 (TBCCD1) from Bos taurus (Bovine).